Reading from the N-terminus, the 42-residue chain is MRDIKTYLSVAPVLSTLWFGALAGLLIEINRFFPDALTFPFF.

A helical membrane pass occupies residues 7–27 (YLSVAPVLSTLWFGALAGLLI).

The protein belongs to the PsaJ family.

The protein resides in the plastid. Its subcellular location is the chloroplast thylakoid membrane. May help in the organization of the PsaE and PsaF subunits. In Platanus occidentalis (Sycamore), this protein is Photosystem I reaction center subunit IX.